Reading from the N-terminus, the 239-residue chain is Fatty acid metabolism regulator protein (239 aa).

An HTH gntR-type domain is found at 6 to 74 (QSPAGFAEEY…HGKPTKVNNF (69 aa)). The segment at residues 34 to 53 (ERELSELIGVTRTTLREVLQ) is a DNA-binding region (H-T-H motif).

In terms of assembly, homodimer.

Its subcellular location is the cytoplasm. Functionally, multifunctional regulator of fatty acid metabolism. Represses transcription of at least eight genes required for fatty acid transport and beta-oxidation including fadA, fadB, fadD, fadL and fadE. Activates transcription of at least three genes required for unsaturated fatty acid biosynthesis: fabA, fabB and iclR, the gene encoding the transcriptional regulator of the aceBAK operon encoding the glyoxylate shunt enzymes. Binding of FadR is specifically inhibited by long chain fatty acyl-CoA compounds. The polypeptide is Fatty acid metabolism regulator protein (Salmonella typhimurium (strain LT2 / SGSC1412 / ATCC 700720)).